A 435-amino-acid polypeptide reads, in one-letter code: Glutamyl-tRNA reductase (435 aa).

Residues 49–52, Ser109, 114–116, and Gln120 contribute to the substrate site; these read TCNR and ETQ. The Nucleophile role is filled by Cys50. 189–194 serves as a coordination point for NADP(+); it reads GAGEMS.

It belongs to the glutamyl-tRNA reductase family. As to quaternary structure, homodimer.

It carries out the reaction (S)-4-amino-5-oxopentanoate + tRNA(Glu) + NADP(+) = L-glutamyl-tRNA(Glu) + NADPH + H(+). It participates in porphyrin-containing compound metabolism; protoporphyrin-IX biosynthesis; 5-aminolevulinate from L-glutamyl-tRNA(Glu): step 1/2. In terms of biological role, catalyzes the NADPH-dependent reduction of glutamyl-tRNA(Glu) to glutamate 1-semialdehyde (GSA). The sequence is that of Glutamyl-tRNA reductase from Listeria monocytogenes serotype 4a (strain HCC23).